The following is a 75-amino-acid chain: Small ribosomal subunit protein bS18 (75 aa).

It belongs to the bacterial ribosomal protein bS18 family. As to quaternary structure, part of the 30S ribosomal subunit. Forms a tight heterodimer with protein bS6.

Functionally, binds as a heterodimer with protein bS6 to the central domain of the 16S rRNA, where it helps stabilize the platform of the 30S subunit. In Aliivibrio fischeri (strain ATCC 700601 / ES114) (Vibrio fischeri), this protein is Small ribosomal subunit protein bS18.